The primary structure comprises 58 residues: Large ribosomal subunit protein bL32 (58 aa).

The protein belongs to the bacterial ribosomal protein bL32 family.

The polypeptide is Large ribosomal subunit protein bL32 (Caldicellulosiruptor saccharolyticus (strain ATCC 43494 / DSM 8903 / Tp8T 6331)).